The following is a 424-amino-acid chain: Histidine--tRNA ligase (424 aa).

The protein belongs to the class-II aminoacyl-tRNA synthetase family. Homodimer.

It localises to the cytoplasm. The catalysed reaction is tRNA(His) + L-histidine + ATP = L-histidyl-tRNA(His) + AMP + diphosphate + H(+). The chain is Histidine--tRNA ligase from Yersinia pestis bv. Antiqua (strain Antiqua).